Reading from the N-terminus, the 153-residue chain is Pheromone-binding protein Gp-9 (153 aa).

Positions 1 to 19 are cleaved as a signal peptide; sequence MKTFVLHIFIFALVAFASA. Disulfide bonds link cysteine 37–cysteine 77, cysteine 73–cysteine 129, and cysteine 118–cysteine 138.

Belongs to the PBP/GOBP family. In terms of assembly, homodimer.

Its subcellular location is the secreted. In terms of biological role, colony queen number, a major feature of social organization, is associated with worker genotype for Gp-9. Colonies are headed by either a single reproductive queen (monogyne form) or multiple queens (polygyne form). Differences in worker Gp-9 genotypes between social forms may cause differences in workers' abilities to recognize queens and regulate their numbers. This chain is Pheromone-binding protein Gp-9, found in Solenopsis saevissima (Fire ant).